We begin with the raw amino-acid sequence, 311 residues long: Putative prophage capsid protein YqbE (311 aa).

The protein belongs to the encapsulin family. Family 3 subfamily.

In terms of biological role, possibly a prophage capsid protein. In Bacillus subtilis (strain 168), this protein is Putative prophage capsid protein YqbE (yqbE).